We begin with the raw amino-acid sequence, 165 residues long: Small ribosomal subunit protein uS5 (165 aa).

The S5 DRBM domain occupies 10–73 (LVEKLVAVDR…EAARRNMITV (64 aa)).

It belongs to the universal ribosomal protein uS5 family. Part of the 30S ribosomal subunit. Contacts proteins S4 and S8.

In terms of biological role, with S4 and S12 plays an important role in translational accuracy. Functionally, located at the back of the 30S subunit body where it stabilizes the conformation of the head with respect to the body. The sequence is that of Small ribosomal subunit protein uS5 from Acinetobacter baumannii (strain AB307-0294).